Consider the following 251-residue polypeptide: Cell division protein ZapD (251 aa).

This sequence belongs to the ZapD family. In terms of assembly, interacts with FtsZ.

The protein localises to the cytoplasm. Cell division factor that enhances FtsZ-ring assembly. Directly interacts with FtsZ and promotes bundling of FtsZ protofilaments, with a reduction in FtsZ GTPase activity. In Burkholderia orbicola (strain MC0-3), this protein is Cell division protein ZapD.